The following is a 317-amino-acid chain: Olfactory receptor 1082 (317 aa).

The Extracellular segment spans residues 1–26; that stretch reads MESGNSTRRFSSFFLLGFTENPQLHF. N5 carries N-linked (GlcNAc...) asparagine glycosylation. Residues 27–51 form a helical membrane-spanning segment; that stretch reads LIFALFLSMYLVTVLGNLLIIMAII. Topologically, residues 52-58 are cytoplasmic; it reads TQSHLHT. Residues 59 to 80 form a helical membrane-spanning segment; it reads PMYFFLANLSFVDICFTSTTIP. The Extracellular segment spans residues 81–101; it reads KMLVNIYTQSKSITYEDCISQ. An intrachain disulfide couples C98 to C190. Residues 102–121 form a helical membrane-spanning segment; sequence MCVFLVFAELGNFLLAVMAY. Residues 122-140 lie on the Cytoplasmic side of the membrane; that stretch reads DRYVAXCHPLCYTVIVNHR. A helical membrane pass occupies residues 141 to 159; sequence LCILLLLLSWVISIFHAFI. At 160-197 the chain is on the extracellular side; that stretch reads QSLIVLQLTFCGDVKIPHFFCELNQLSQLTCSDNFPSH. The helical transmembrane segment at 198-220 threads the bilayer; sequence LIMNLVPVMLAAISFSGILYSYF. Residues 221–237 lie on the Cytoplasmic side of the membrane; the sequence is KIVSSIHSISTVQGKYK. A helical transmembrane segment spans residues 238-261; the sequence is AFSTCASHLSIVSLFYSTGLGVYV. The Extracellular segment spans residues 262 to 273; it reads SSAVVQSSHSAA. A helical transmembrane segment spans residues 274–293; it reads SASVMYTVVTPMLNPFIYSL. Residues 294 to 317 lie on the Cytoplasmic side of the membrane; that stretch reads RNKDVKRALERLLEGNCKVHHWTG.

It belongs to the G-protein coupled receptor 1 family. Olfactory epithelium.

It localises to the cell membrane. Functionally, odorant receptor. The sequence is that of Olfactory receptor 1082 (Olr1082) from Rattus norvegicus (Rat).